Here is a 394-residue protein sequence, read N- to C-terminus: MPKIETRTEPMVINMGPHHPSMHGVLRLMVTLDGEDVIDCEPVIGYLHRGMEKIAENRTNIMFIPYVSRWDYAAGMFNEAVTVNAPEKLAGIPVPKRASYIRVIMLELNRIANHLLWLGPFLADVGAQTPFFYIFREREYIYDLFEAATGMRFINNNYFRIGGVAADLTYGWVTKCRDFCDYFLPKVDEYERLITNNPIFVRRLQGVGKISREEAINWGLSGPMLRASGVKWDLRKVDHYECYDDFDWDVPVATEGDCLARYIVRIQEMRESVKIIRQALDGLPGGPYENLEAKRMLEGAKSEWNGFDYQYIGKKLSPTFKIPKGEHYVRVESGKGELGIYLIGDDNVFPWRWKIRPPDFNNLQVLPQLLKGMKVADIVAILGSIDVIMGSVDR.

Belongs to the complex I 49 kDa subunit family. In terms of assembly, NDH-1 can be composed of about 15 different subunits; different subcomplexes with different compositions have been identified which probably have different functions.

It is found in the cellular thylakoid membrane. It catalyses the reaction a plastoquinone + NADH + (n+1) H(+)(in) = a plastoquinol + NAD(+) + n H(+)(out). The enzyme catalyses a plastoquinone + NADPH + (n+1) H(+)(in) = a plastoquinol + NADP(+) + n H(+)(out). NDH-1 shuttles electrons from an unknown electron donor, via FMN and iron-sulfur (Fe-S) centers, to quinones in the respiratory and/or the photosynthetic chain. The immediate electron acceptor for the enzyme in this species is believed to be plastoquinone. Couples the redox reaction to proton translocation, and thus conserves the redox energy in a proton gradient. Cyanobacterial NDH-1 also plays a role in inorganic carbon-concentration. The protein is NAD(P)H-quinone oxidoreductase subunit H of Thermosynechococcus vestitus (strain NIES-2133 / IAM M-273 / BP-1).